The chain runs to 376 residues: N-acetyldiaminopimelate deacetylase (376 aa).

The active site involves Asp69. The Proton acceptor role is filled by Glu128.

This sequence belongs to the peptidase M20A family. N-acetyldiaminopimelate deacetylase subfamily.

It carries out the reaction N-acetyl-(2S,6S)-2,6-diaminopimelate + H2O = (2S,6S)-2,6-diaminopimelate + acetate. The protein operates within amino-acid biosynthesis; L-lysine biosynthesis via DAP pathway; LL-2,6-diaminopimelate from (S)-tetrahydrodipicolinate (acetylase route): step 3/3. Catalyzes the conversion of N-acetyl-diaminopimelate to diaminopimelate and acetate. This Bacillus cereus (strain ATCC 14579 / DSM 31 / CCUG 7414 / JCM 2152 / NBRC 15305 / NCIMB 9373 / NCTC 2599 / NRRL B-3711) protein is N-acetyldiaminopimelate deacetylase.